A 272-amino-acid polypeptide reads, in one-letter code: Putative phosphoenolpyruvate synthase regulatory protein (272 aa).

152-159 (GVSRCGKT) contributes to the ADP binding site.

Belongs to the pyruvate, phosphate/water dikinase regulatory protein family. PSRP subfamily.

It carries out the reaction [pyruvate, water dikinase] + ADP = [pyruvate, water dikinase]-phosphate + AMP + H(+). The catalysed reaction is [pyruvate, water dikinase]-phosphate + phosphate + H(+) = [pyruvate, water dikinase] + diphosphate. In terms of biological role, bifunctional serine/threonine kinase and phosphorylase involved in the regulation of the phosphoenolpyruvate synthase (PEPS) by catalyzing its phosphorylation/dephosphorylation. This is Putative phosphoenolpyruvate synthase regulatory protein from Pseudomonas putida (strain ATCC 47054 / DSM 6125 / CFBP 8728 / NCIMB 11950 / KT2440).